The sequence spans 267 residues: tRNA-cytidine(32) 2-sulfurtransferase 1 (267 aa).

Positions 42-47 (SGGKDS) match the PP-loop motif motif. The [4Fe-4S] cluster site is built by Cys-117, Cys-120, and Cys-208.

Belongs to the TtcA family. As to quaternary structure, homodimer. It depends on Mg(2+) as a cofactor. Requires [4Fe-4S] cluster as cofactor.

It localises to the cytoplasm. It carries out the reaction cytidine(32) in tRNA + S-sulfanyl-L-cysteinyl-[cysteine desulfurase] + AH2 + ATP = 2-thiocytidine(32) in tRNA + L-cysteinyl-[cysteine desulfurase] + A + AMP + diphosphate + H(+). The protein operates within tRNA modification. Functionally, catalyzes the ATP-dependent 2-thiolation of cytidine in position 32 of tRNA, to form 2-thiocytidine (s(2)C32). The sulfur atoms are provided by the cysteine/cysteine desulfurase (IscS) system. The protein is tRNA-cytidine(32) 2-sulfurtransferase 1 of Francisella tularensis subsp. tularensis (strain FSC 198).